The sequence spans 462 residues: B3 domain-containing protein REM8 (462 aa).

DNA-binding regions (TF-B3) lie at residues Asn11–Ser103, Cys148–Arg243, and Phe249–Ile346. The tract at residues Phe351 to Val419 is disordered. Basic and acidic residues predominate over residues Glu369–Pro397. The segment covering Arg399 to Ser418 has biased composition (polar residues).

The protein localises to the nucleus. The protein is B3 domain-containing protein REM8 (REM8) of Arabidopsis thaliana (Mouse-ear cress).